Reading from the N-terminus, the 107-residue chain is Small integral membrane protein 19 (107 aa).

Residues 25–43 (ATNVYLIVILVSFGLFMYA) form a helical membrane-spanning segment.

This sequence belongs to the SMIM19 family.

It is found in the membrane. This is Small integral membrane protein 19 (SMIM19) from Homo sapiens (Human).